Consider the following 284-residue polypeptide: Aminoglycoside 6-adenylyltransferase (284 aa).

Homodimer.

The protein resides in the cytoplasm. The enzyme catalyses streptomycin + ATP = 6-O-adenylylstreptomycin + diphosphate. It catalyses the reaction streptomycin + GTP = 6-O-guanylylstreptomycin + diphosphate. The catalysed reaction is streptidine + ATP = 6-O-adenylylstreptidine + diphosphate. Mediates bacterial resistance to streptomycin. Adenylates streptomycin on the O-6 residue. Adenylates streptidine on the O-6 residue. Does not act on spectinomycin, neomycin-B or kanamycin. Specific for ATP and GTP nucleotides incorporating a purine ring. No reaction with CTP or UTP. This chain is Aminoglycoside 6-adenylyltransferase, found in Bacillus subtilis (strain 168).